The sequence spans 20 residues: Major extrapallial fluid protein (20 aa).

Residues 1–20 (NPVDDHHDDHHDAPIVEHHD) form a disordered region.

As to quaternary structure, homodimer. Glycosylated.

In terms of biological role, appears to be a building block of the soluble organic matrix of the shell. The protein binds calcium. The polypeptide is Major extrapallial fluid protein (Mytilus edulis (Blue mussel)).